Here is a 359-residue protein sequence, read N- to C-terminus: 3-dehydroquinate synthase (359 aa).

Residues 71-76 (DGEQFK), 105-109 (GVIGD), 129-130 (TT), K142, K151, and 169-172 (CLHT) contribute to the NAD(+) site. Residues E184, H247, and H264 each coordinate Zn(2+).

Belongs to the sugar phosphate cyclases superfamily. Dehydroquinate synthase family. The cofactor is Co(2+). Requires Zn(2+) as cofactor. It depends on NAD(+) as a cofactor.

Its subcellular location is the cytoplasm. It carries out the reaction 7-phospho-2-dehydro-3-deoxy-D-arabino-heptonate = 3-dehydroquinate + phosphate. It functions in the pathway metabolic intermediate biosynthesis; chorismate biosynthesis; chorismate from D-erythrose 4-phosphate and phosphoenolpyruvate: step 2/7. In terms of biological role, catalyzes the conversion of 3-deoxy-D-arabino-heptulosonate 7-phosphate (DAHP) to dehydroquinate (DHQ). The protein is 3-dehydroquinate synthase of Shewanella putrefaciens (strain CN-32 / ATCC BAA-453).